The sequence spans 909 residues: Protein translocase subunit SecA (909 aa).

Residues glutamine 87, 105–109, and aspartate 514 contribute to the ATP site; that span reads GEGKT. Residues 879-909 form a disordered region; it reads TPVQGGPKVGRNDPCPCGSGKKYKHCHGKLS. Zn(2+) contacts are provided by cysteine 893, cysteine 895, cysteine 904, and histidine 905. Positions 899 to 909 are enriched in basic residues; that stretch reads KKYKHCHGKLS.

This sequence belongs to the SecA family. In terms of assembly, monomer and homodimer. Part of the essential Sec protein translocation apparatus which comprises SecA, SecYEG and auxiliary proteins SecDF-YajC and YidC. The cofactor is Zn(2+).

The protein resides in the cell inner membrane. It localises to the cytoplasm. The enzyme catalyses ATP + H2O + cellular proteinSide 1 = ADP + phosphate + cellular proteinSide 2.. Part of the Sec protein translocase complex. Interacts with the SecYEG preprotein conducting channel. Has a central role in coupling the hydrolysis of ATP to the transfer of proteins into and across the cell membrane, serving both as a receptor for the preprotein-SecB complex and as an ATP-driven molecular motor driving the stepwise translocation of polypeptide chains across the membrane. This is Protein translocase subunit SecA from Azoarcus sp. (strain BH72).